A 154-amino-acid polypeptide reads, in one-letter code: Periplasmic nitrate reductase, electron transfer subunit (154 aa).

Residues methionine 1–threonine 24 form the signal peptide. Positions alanine 27–glutamate 47 are disordered. The heme c site is built by histidine 68, cysteine 82, cysteine 85, histidine 86, histidine 103, cysteine 122, cysteine 125, and histidine 126.

Belongs to the NapB family. In terms of assembly, component of the periplasmic nitrate reductase NapAB complex composed of NapA and NapB. Binds 2 heme C groups per subunit.

The protein localises to the periplasm. Its function is as follows. Electron transfer subunit of the periplasmic nitrate reductase complex NapAB. Receives electrons from the membrane-anchored tetraheme c-type NapC protein and transfers these to NapA subunit, thus allowing electron flow between membrane and periplasm. Essential for periplasmic nitrate reduction with nitrate as the terminal electron acceptor. The chain is Periplasmic nitrate reductase, electron transfer subunit from Cereibacter sphaeroides (Rhodobacter sphaeroides).